The chain runs to 501 residues: uncharacterized protein (501 aa).

Helical transmembrane passes span Ala-14–Val-34, Phe-73–Met-93, Ile-111–Phe-131, Phe-197–Ile-217, Ile-274–Gly-294, Phe-297–Ile-317, and Phe-466–Leu-486.

It is found in the membrane. This is an uncharacterized protein from Dictyostelium discoideum (Social amoeba).